The chain runs to 73 residues: Ferredoxin-thioredoxin reductase, variable chain (73 aa).

An interaction with ferredoxin region spans residues 43-46 (NGKP).

It belongs to the ferredoxin thioredoxin reductase alpha subunit family. Heterodimer of subunit A (variable subunit) and subunit B (catalytic subunit). Heterodimeric FTR forms a complex with ferredoxin and thioredoxin.

Its function is as follows. Variable subunit of the ferredoxin-thioredoxin reductase (FTR), which catalyzes the two-electron reduction of thioredoxins by the electrons provided by reduced ferredoxin. The sequence is that of Ferredoxin-thioredoxin reductase, variable chain (ftrV) from Synechococcus sp. (strain ATCC 27144 / PCC 6301 / SAUG 1402/1) (Anacystis nidulans).